Here is a 90-residue protein sequence, read N- to C-terminus: Aminoacyl carrier protein 1 (90 aa).

A Carrier domain is found at 6-84 (TDVRNRIIKL…TLERMVMTQL (79 aa)). Position 42 is an O-(pantetheine 4'-phosphoryl)serine (serine 42).

Post-translationally, 4'-phosphopantetheine is transferred from CoA to a specific serine of the apo-form of this carrier protein.

Aminoacyl carrier protein. Can be charged with L-glycine via the formation of a thioester bond between the amino acid and the 4'-phosphopantetheinyl prosthetic group, catalyzed by the bll0957 ligase. The polypeptide is Aminoacyl carrier protein 1 (Bradyrhizobium diazoefficiens (strain JCM 10833 / BCRC 13528 / IAM 13628 / NBRC 14792 / USDA 110)).